Reading from the N-terminus, the 760-residue chain is UDP-N-acetylmuramoyl-L-alanyl-D-glutamate--2,6-diaminopimelate ligase MurE homolog, chloroplastic (760 aa).

The transit peptide at 1–59 directs the protein to the chloroplast; that stretch reads MATAPLAFRLPFPFSFPSASRPPPSRILAPPTPRRLPLRLAAAAARRFRPPTADDEPPE. 2 disordered regions span residues 13–159 and 176–205; these read PFSF…TDEL and LSVV…DEDG. Pro residues predominate over residues 20–34; the sequence is SRPPPSRILAPPTPR. The segment covering 53-62 has biased composition (acidic residues); the sequence is ADDEPPEAAE. The segment covering 118–132 has biased composition (basic and acidic residues); it reads EIDRAIAEKREEFTR. Acidic residues-rich tracts occupy residues 150–159 and 182–205; these read PEDEDLTDEL and ADEE…DEDG.

This sequence belongs to the MurCDEF family. MurE subfamily. Component of the plastid-encoded plastid RNA polymerase (PEP) complex.

It localises to the plastid. Its subcellular location is the chloroplast. In terms of biological role, required for the activity of the plastid-encoded RNA polymerase (PEP) and full expression of genes transcribed by PEP. Required for the proper build-up and formation of the PEP-complex. This chain is UDP-N-acetylmuramoyl-L-alanyl-D-glutamate--2,6-diaminopimelate ligase MurE homolog, chloroplastic, found in Zea mays (Maize).